A 273-amino-acid polypeptide reads, in one-letter code: ATP synthase subunit delta (273 aa).

The protein belongs to the ATPase delta chain family. F-type ATPases have 2 components, F(1) - the catalytic core - and F(0) - the membrane proton channel. F(1) has five subunits: alpha(3), beta(3), gamma(1), delta(1), epsilon(1). F(0) has three main subunits: a(1), b(2) and c(10-14). The alpha and beta chains form an alternating ring which encloses part of the gamma chain. F(1) is attached to F(0) by a central stalk formed by the gamma and epsilon chains, while a peripheral stalk is formed by the delta and b chains.

The protein resides in the cell membrane. Functionally, f(1)F(0) ATP synthase produces ATP from ADP in the presence of a proton or sodium gradient. F-type ATPases consist of two structural domains, F(1) containing the extramembraneous catalytic core and F(0) containing the membrane proton channel, linked together by a central stalk and a peripheral stalk. During catalysis, ATP synthesis in the catalytic domain of F(1) is coupled via a rotary mechanism of the central stalk subunits to proton translocation. This protein is part of the stalk that links CF(0) to CF(1). It either transmits conformational changes from CF(0) to CF(1) or is implicated in proton conduction. The protein is ATP synthase subunit delta of Corynebacterium diphtheriae (strain ATCC 700971 / NCTC 13129 / Biotype gravis).